Consider the following 492-residue polypeptide: 3-octaprenyl-4-hydroxybenzoate carboxy-lyase (492 aa).

Asn-177 lines the Mn(2+) pocket. Residues 180-182 (IYR), 194-196 (RWL), and 199-200 (RG) each bind prenylated FMN. Residue Glu-243 coordinates Mn(2+). The active-site Proton donor is the Asp-292.

The protein belongs to the UbiD family. As to quaternary structure, homohexamer. It depends on prenylated FMN as a cofactor. The cofactor is Mn(2+).

The protein resides in the cell membrane. It catalyses the reaction a 4-hydroxy-3-(all-trans-polyprenyl)benzoate + H(+) = a 2-(all-trans-polyprenyl)phenol + CO2. The protein operates within cofactor biosynthesis; ubiquinone biosynthesis. Its function is as follows. Catalyzes the decarboxylation of 3-octaprenyl-4-hydroxy benzoate to 2-octaprenylphenol, an intermediate step in ubiquinone biosynthesis. The chain is 3-octaprenyl-4-hydroxybenzoate carboxy-lyase from Neisseria meningitidis serogroup B (strain ATCC BAA-335 / MC58).